Reading from the N-terminus, the 184-residue chain is Two-component response regulator ARR5 (184 aa).

Positions 26–154 (HVLAVDDSMV…DVKRLRDSLM (129 aa)) constitute a Response regulatory domain. Aspartate 87 carries the post-translational modification 4-aspartylphosphate.

It belongs to the ARR family. Type-A subfamily. Post-translationally, two-component system major event consists of a His-to-Asp phosphorelay between a sensor histidine kinase (HK) and a response regulator (RR). In plants, the His-to-Asp phosphorelay involves an additional intermediate named Histidine-containing phosphotransfer protein (HPt). This multistep phosphorelay consists of a His-Asp-His-Asp sequential transfer of a phosphate group between first a His and an Asp of the HK protein, followed by the transfer to a conserved His of the HPt protein and finally the transfer to an Asp in the receiver domain of the RR protein. As to expression, predominantly expressed in roots and shoot apical meristems.

It localises to the nucleus. Functions as a response regulator involved in His-to-Asp phosphorelay signal transduction system. Phosphorylation of the Asp residue in the receiver domain activates the ability of the protein to promote the transcription of target genes. Type-A response regulators seem to act as negative regulators of the cytokinin signaling. The chain is Two-component response regulator ARR5 (ARR5) from Arabidopsis thaliana (Mouse-ear cress).